A 251-amino-acid chain; its full sequence is 5'-nucleotidase SurE (251 aa).

Residues aspartate 8, aspartate 9, serine 39, and asparagine 95 each contribute to the a divalent metal cation site.

This sequence belongs to the SurE nucleotidase family. A divalent metal cation is required as a cofactor.

Its subcellular location is the cytoplasm. It catalyses the reaction a ribonucleoside 5'-phosphate + H2O = a ribonucleoside + phosphate. In terms of biological role, nucleotidase that shows phosphatase activity on nucleoside 5'-monophosphates. The chain is 5'-nucleotidase SurE from Ralstonia pickettii (strain 12J).